The following is a 302-amino-acid chain: Probable lipid kinase YegS-like (302 aa).

The region spanning 1–129 (MDKDKVLLVL…IDLGEVNGKL (129 aa)) is the DAGKc domain. ATP is bound by residues Thr-39, 65 to 71 (GDGTLRE), and Thr-92. Mg(2+) is bound by residues Arg-210, Asp-213, and Leu-215. Glu-268 functions as the Proton acceptor in the catalytic mechanism.

It belongs to the diacylglycerol/lipid kinase family. YegS lipid kinase subfamily. Mg(2+) serves as cofactor. Requires Ca(2+) as cofactor.

The protein resides in the cytoplasm. Functionally, probably phosphorylates lipids; the in vivo substrate is unknown. This Pseudomonas aeruginosa (strain ATCC 15692 / DSM 22644 / CIP 104116 / JCM 14847 / LMG 12228 / 1C / PRS 101 / PAO1) protein is Probable lipid kinase YegS-like.